The sequence spans 443 residues: MRPWVPVTGASPHAAVGPAWTTGRRCVGVVTTWWWSVSYVERQVQIIDSLYRAMDASAENGYTDAACRFRYLPEEDGSLGIDSSFFYTIGGVSVSALLNDYGDKGCADLVYDLHDVMYKDIRFGESIRSRMCPRGVNPVPSAPTAPPAGLAAFPSANRRTERCLVWIACVHRLSAVGEAGSLNEPEAARLANDPAEHSNRHVDALGRQQLVCAHVVAGVASDGFGVRAGEERTGARGRHSGSIKPLDNLVVETPIEAARSRHRCAGRPCPRRHRRPCNASKSHRPMRMQQRDRGWTVWQKDFSMLTPLSAGFQHRVLAQQLVARRGRMQPSVVQIGVGRIRADVAGRVAGQDALGRIGRILPNAVARLSIAVRFLRAQSINHSIQSKRDRRSWNGCSKGQRRRGFISIDKKPGPKNKLALMFIREPDRFISIDRNPARRTSWL.

Residues 263-286 (RCAGRPCPRRHRRPCNASKSHRPM) show a composition bias toward basic residues. The segment at 263–292 (RCAGRPCPRRHRRPCNASKSHRPMRMQQRD) is disordered.

To mammalian CGHB.

Its subcellular location is the secreted. It is found in the cell wall. Cell wall protein that resembles the beta subunit of human chorionic gonadotropin. Stimulates growth and change in morphology. The polypeptide is Chorionicgonadotropic hormone-like protein (xcg) (Stenotrophomonas maltophilia (Pseudomonas maltophilia)).